The primary structure comprises 422 residues: Nucleoside transporter 1 (422 aa).

Residues 1–38 (MSTGKESSKAYADIESRGDYKDDGKKGSTLSSKQHFML) lie on the Cytoplasmic side of the membrane. Residues 39-59 (SLTFILIGLSSLNVWNTALGL) form a helical membrane-spanning segment. Residue tryptophan 53 participates in inosine binding. Residues 60-63 (NINF) lie on the Extracellular side of the membrane. Residues 64–82 (KYNTFQITGLVCSSIVALF) traverse the membrane as a helical segment. Topologically, residues 83-87 (VEIPK) are cytoplasmic. A helical transmembrane segment spans residues 88–107 (IMLPFLLGGLSILCAGFQIS). Topologically, residues 108-116 (HSFFTDTQF) are extracellular. A helical transmembrane segment spans residues 117-139 (DTYCLVAFIVIGVVAGLAQTIAF). Glutamine 135 is a binding site for inosine. Residues 140 to 149 (NIGSTMEDNM) lie on the Cytoplasmic side of the membrane. A helical transmembrane segment spans residues 150–174 (GGYMSAGIGISGVFIFVINLLLDQF). Residues 175–185 (VSPEKHYGVNK) are Extracellular-facing. Residues 186–208 (AKLLYLYIICELCLILAIVFCVC) form a helical membrane-spanning segment. At 209 to 241 (NLDLTNKNNKKDEENKENNATLSYMELFKDSYK) the chain is on the cytoplasmic side. Residues 242 to 265 (AILTMFLVNWLTLQLFPGVGHKKW) traverse the membrane as a helical segment. Topologically, residues 266–274 (QESHNISDY) are extracellular. Residues 275–294 (NVTIIVGMFQVFDFLSRYPP) traverse the membrane as a helical segment. Aspartate 287 and arginine 291 together coordinate inosine. Topologically, residues 295-309 (NLTHIKIFKNFTFSL) are cytoplasmic. The helical transmembrane segment at 310–330 (NKLLVANSLRLLFIPWFILNA) threads the bilayer. Topologically, residues 331–338 (CVDHPFFK) are extracellular. A helical transmembrane segment spans residues 339–362 (NIVQQCVCMAMLAFTNGWFNTVPF). Residues 363–374 (LVFVKELKKAKK) are Cytoplasmic-facing. A helical membrane pass occupies residues 375-397 (KKEIEIISTFLVIAMFVGLFCGI). Residues 398–422 (WTTYIYNLFNIVLPKPDLPPIDVTQ) are Extracellular-facing.

The protein belongs to the SLC29A/ENT transporter (TC 2.A.57) family.

The protein localises to the cell membrane. It catalyses the reaction inosine(in) = inosine(out). It carries out the reaction adenosine(in) = adenosine(out). The enzyme catalyses hypoxanthine(out) = hypoxanthine(in). The catalysed reaction is guanosine(in) = guanosine(out). It catalyses the reaction guanine(out) = guanine(in). It carries out the reaction thymidine(in) = thymidine(out). The enzyme catalyses uridine(out) = uridine(in). The catalysed reaction is uracil(in) = uracil(out). It catalyses the reaction thymine(out) = thymine(in). It carries out the reaction adenine(out) = adenine(in). The enzyme catalyses cytosine(out) = cytosine(in). The catalysed reaction is xanthine(out) = xanthine(in). GSK4 (5-methyl-N-[2-(2-oxo-1-azepanyl)ethyl]-2-phenyl-1,3-oxazole-4-carbox-amide) disrupts the transport activity at 500 nM. Inhibited partially by 10 uM dipyridamole. Inhibited partially by N,N'-1,3-benzothiazole-2,6-diyldi(2-furamide), 2-bromo-N-(4-[1,3]oxazolo[4,5-b]pyridin-2-ylphenyl)benzamide, 4-methyl-7-[(3,4,5-trimethoxybenzyl)oxy]-2H-chromen-2-one, 2-(1-methyl-1H-indol-3-yl)-2-oxo-N-[4-(pyrrolidin-1-ylcarbonyl)phenyl]acet amide and 2-[2-(2-methylphenyl)vinyl]-4(3H)-quinazolinone. Functionally, sodium-independent nucleoside and nucleobase transporter with a broad substrate specificity. Plays a key role in the utilization of host purine sources by P.falciparum during intraerythrocytic development enabling parasite growth in the presence of physiological concentrations of adenosine, inosine, guanine, guanosine, xanthine and hypoxanthine. Essential for parasite transition from ring to trophozoite or from trophozoite to schizont stage but not for erythrocyte invasion by merozoites. This chain is Nucleoside transporter 1, found in Plasmodium falciparum (isolate 3D7).